The following is a 954-amino-acid chain: Glycine dehydrogenase (decarboxylating) (954 aa).

Residue K706 is modified to N6-(pyridoxal phosphate)lysine.

It belongs to the GcvP family. In terms of assembly, the glycine cleavage system is composed of four proteins: P, T, L and H. Pyridoxal 5'-phosphate is required as a cofactor.

The catalysed reaction is N(6)-[(R)-lipoyl]-L-lysyl-[glycine-cleavage complex H protein] + glycine + H(+) = N(6)-[(R)-S(8)-aminomethyldihydrolipoyl]-L-lysyl-[glycine-cleavage complex H protein] + CO2. The glycine cleavage system catalyzes the degradation of glycine. The P protein binds the alpha-amino group of glycine through its pyridoxal phosphate cofactor; CO(2) is released and the remaining methylamine moiety is then transferred to the lipoamide cofactor of the H protein. In Pseudomonas savastanoi pv. phaseolicola (strain 1448A / Race 6) (Pseudomonas syringae pv. phaseolicola (strain 1448A / Race 6)), this protein is Glycine dehydrogenase (decarboxylating).